A 120-amino-acid chain; its full sequence is Large ribosomal subunit protein bL19c (120 aa).

Belongs to the bacterial ribosomal protein bL19 family.

The protein resides in the plastid. It is found in the chloroplast. The sequence is that of Large ribosomal subunit protein bL19c from Phaeodactylum tricornutum (strain CCAP 1055/1).